Here is a 376-residue protein sequence, read N- to C-terminus: Putative F-box protein At1g30930 (376 aa).

The region spanning 1-44 (MKNSIPIDLIIEIVSRSTAKSVARCHCVSKQWRAIFRRKYFIEL) is the F-box domain.

This is Putative F-box protein At1g30930 from Arabidopsis thaliana (Mouse-ear cress).